A 489-amino-acid chain; its full sequence is Cysteine--tRNA ligase (489 aa).

Cysteine 27 is a Zn(2+) binding site. The 'HIGH' region signature appears at 29-39 (VTVYDLCHLGH). Residues cysteine 211, histidine 236, and glutamate 240 each coordinate Zn(2+). The short motif at 268–272 (KMSKS) is the 'KMSKS' region element. Lysine 271 lines the ATP pocket.

It belongs to the class-I aminoacyl-tRNA synthetase family. Monomer. The cofactor is Zn(2+).

The protein resides in the cytoplasm. The enzyme catalyses tRNA(Cys) + L-cysteine + ATP = L-cysteinyl-tRNA(Cys) + AMP + diphosphate. This is Cysteine--tRNA ligase from Prochlorococcus marinus (strain AS9601).